Consider the following 218-residue polypeptide: MSSDDEGREEYLFKIVVIGDSAVGKSNLLSRYARNEFSANSKATIGVEFQTQSMEIEGKEVKAQIWDTAGQERFRAVTSAYYRGAVGALVVYDITRRTTFESVGRWLDELKIHSDTTVARMLVGNKCDLENIRAVSVEEGKALAEEEGLFFVETSALDSTNVKTAFEMVILDIYNNVSRKQLNSDTYKDELTVNRVSLVKDDNSASKQSSGFSCCSST.

19 to 26 (GDSAVGKS) provides a ligand contact to GTP. The short motif at 41–49 (SKATIGVEF) is the Effector region element. Residues 67-71 (DTAGQ), 125-128 (NKCD), and 155-156 (SA) each bind GTP. Residues Cys214 and Cys215 are each lipidated (S-geranylgeranyl cysteine). Cys215 bears the Cysteine methyl ester mark. A propeptide spans 216–218 (SST) (removed in mature form).

It belongs to the small GTPase superfamily. Rab family.

The protein resides in the cell membrane. In terms of biological role, intracellular vesicle trafficking and protein transport. The polypeptide is Ras-related protein RABA5e (RABA5E) (Arabidopsis thaliana (Mouse-ear cress)).